We begin with the raw amino-acid sequence, 160 residues long: Major pollen allergen Bet v 1-F/I (160 aa).

Positions 55, 82, 84, and 101 each coordinate brassinolide.

It belongs to the BetVI family.

It is found in the cytoplasm. In terms of biological role, may be a general steroid carrier protein. The sequence is that of Major pollen allergen Bet v 1-F/I (BETV1F) from Betula pendula (European white birch).